Consider the following 216-residue polypeptide: ADP-sugar pyrophosphatase (216 aa).

Met1 carries the N-acetylmethionine modification. Residues Ser3 and Ser10 each carry the phosphoserine modification. A substrate-binding site is contributed by Trp28. A Glycyl lysine isopeptide (Lys-Gly) (interchain with G-Cter in SUMO2) cross-link involves residue Lys42. Residue Thr45 is modified to Phosphothreonine. Residues 46-47 and Arg51 each bind substrate; that span reads WE. Residues 57–194 enclose the Nudix hydrolase domain; that stretch reads QTADGVAVIP…EEHLTVDARV (138 aa). Tyr74 bears the Phosphotyrosine mark. Residue Arg84 participates in substrate binding. Position 96 (Ala96) interacts with Mg(2+). The Nudix box signature appears at 97-118; sequence GLIDDGETPEAAALRELEEETG. Leu98 provides a ligand contact to substrate. Mg(2+)-binding residues include Glu112 and Glu116. Asp133 is a substrate binding site. Position 163 (Glu163) interacts with Mg(2+). 2 positions are modified to N6-acetyllysine: Lys207 and Lys215.

This sequence belongs to the Nudix hydrolase family. As to quaternary structure, homodimer. Interacts with PARG. Mg(2+) is required as a cofactor. In terms of processing, phosphorylation at Thr-45 is required for homodimer stability; dephosphorylation results in destabilization of the homodimer. Dephosphorylation at Thr-45 promotes the ATP-synthesis activity.

It is found in the nucleus. It carries out the reaction D-ribose 5-phosphate + ATP + H(+) = ADP-D-ribose + diphosphate. The enzyme catalyses ADP-D-ribose + H2O = D-ribose 5-phosphate + AMP + 2 H(+). The catalysed reaction is 8-oxo-dGDP + H2O = 8-oxo-dGMP + phosphate + H(+). Functionally, enzyme that can either act as an ADP-sugar pyrophosphatase in absence of diphosphate or catalyze the synthesis of ATP in presence of diphosphate. In absence of diphosphate, hydrolyzes with similar activities various modified nucleoside diphosphates such as ADP-ribose, ADP-mannose, ADP-glucose, 8-oxo-GDP and 8-oxo-dGDP. Can also hydrolyze other nucleotide sugars with low activity. In presence of diphosphate, mediates the synthesis of ATP in the nucleus by catalyzing the conversion of ADP-ribose to ATP and ribose 5-phosphate. Nuclear ATP synthesis takes place when dephosphorylated at Thr-45. Nuclear ATP generation is required for extensive chromatin remodeling events that are energy-consuming. Does not play a role in U8 snoRNA decapping activity. Binds U8 snoRNA. The polypeptide is ADP-sugar pyrophosphatase (Pongo abelii (Sumatran orangutan)).